The sequence spans 204 residues: uncharacterized protein (204 aa).

The disordered stretch occupies residues 47-108 (TDSSDDEGGA…EDSDEEGEGG (62 aa)). Positions 49 to 106 (SSDDEGGASSGDEGEASSDDEGDASSDDEEEASSDGEGVVEDEETLDAEGEDSDEEGE) are enriched in acidic residues.

Its subcellular location is the mitochondrion. This is an uncharacterized protein from Paramecium tetraurelia.